A 131-amino-acid chain; its full sequence is Small ribosomal subunit protein uS8 (131 aa).

Belongs to the universal ribosomal protein uS8 family. In terms of assembly, part of the 30S ribosomal subunit. Contacts proteins S5 and S12.

In terms of biological role, one of the primary rRNA binding proteins, it binds directly to 16S rRNA central domain where it helps coordinate assembly of the platform of the 30S subunit. This chain is Small ribosomal subunit protein uS8, found in Chlorobium luteolum (strain DSM 273 / BCRC 81028 / 2530) (Pelodictyon luteolum).